Here is a 91-residue protein sequence, read N- to C-terminus: Large ribosomal subunit protein eL37 (91 aa).

Residues Cys-19, Cys-22, Cys-34, and Cys-37 each contribute to the Zn(2+) site. The C4-type zinc-finger motif lies at 19-37 (CKRCGKSSFHIQKKRCASC).

Belongs to the eukaryotic ribosomal protein eL37 family. The cofactor is Zn(2+).

Binds to the 23S rRNA. The polypeptide is Large ribosomal subunit protein eL37 (Caenorhabditis elegans).